The following is a 471-amino-acid chain: 3-isopropylmalate dehydratase large subunit (471 aa).

3 residues coordinate [4Fe-4S] cluster: cysteine 347, cysteine 407, and cysteine 410.

The protein belongs to the aconitase/IPM isomerase family. LeuC type 1 subfamily. As to quaternary structure, heterodimer of LeuC and LeuD. [4Fe-4S] cluster serves as cofactor.

The catalysed reaction is (2R,3S)-3-isopropylmalate = (2S)-2-isopropylmalate. It functions in the pathway amino-acid biosynthesis; L-leucine biosynthesis; L-leucine from 3-methyl-2-oxobutanoate: step 2/4. In terms of biological role, catalyzes the isomerization between 2-isopropylmalate and 3-isopropylmalate, via the formation of 2-isopropylmaleate. The protein is 3-isopropylmalate dehydratase large subunit of Edwardsiella ictaluri (strain 93-146).